The chain runs to 260 residues: Snake venom serine proteinase 4a (260 aa).

The first 18 residues, 1 to 18, serve as a signal peptide directing secretion; sequence MVLIRVLANLLILQLSYA. The propeptide occupies 19-24; it reads QMSSEL. The 227-residue stretch at 25–251 folds into the Peptidase S1 domain; it reads VTGGDECNRN…HLDWIQRIIA (227 aa). Disulfide bonds link Cys31–Cys163, Cys50–Cys66, Cys98–Cys258, Cys142–Cys212, Cys174–Cys191, and Cys202–Cys227. The active-site Charge relay system is His65. The N-linked (GlcNAc...) asparagine glycan is linked to Asn103. Residue Asp110 is the Charge relay system of the active site. Catalysis depends on Ser206, which acts as the Charge relay system.

The protein belongs to the peptidase S1 family. Snake venom subfamily. As to quaternary structure, monomer. In terms of tissue distribution, expressed by the venom gland.

The protein resides in the secreted. Its function is as follows. Snake venom serine protease that may act in the hemostasis system of the prey. The chain is Snake venom serine proteinase 4a from Crotalus adamanteus (Eastern diamondback rattlesnake).